Reading from the N-terminus, the 152-residue chain is UPF0178 protein KPK_4355 (152 aa).

The protein belongs to the UPF0178 family.

In Klebsiella pneumoniae (strain 342), this protein is UPF0178 protein KPK_4355.